The sequence spans 284 residues: Shikimate dehydrogenase (NADP(+)) (284 aa).

Shikimate is bound by residues Ser20–Ser22 and Ser67. The active-site Proton acceptor is Lys71. Residue Asp83 coordinates NADP(+). The shikimate site is built by Asn92 and Asp107. NADP(+) is bound by residues Gly129–Ala133 and Ile227. Residue Tyr229 participates in shikimate binding. Gly250 contributes to the NADP(+) binding site.

It belongs to the shikimate dehydrogenase family. Homodimer.

It carries out the reaction shikimate + NADP(+) = 3-dehydroshikimate + NADPH + H(+). It functions in the pathway metabolic intermediate biosynthesis; chorismate biosynthesis; chorismate from D-erythrose 4-phosphate and phosphoenolpyruvate: step 4/7. Involved in the biosynthesis of the chorismate, which leads to the biosynthesis of aromatic amino acids. Catalyzes the reversible NADPH linked reduction of 3-dehydroshikimate (DHSA) to yield shikimate (SA). This chain is Shikimate dehydrogenase (NADP(+)), found in Streptococcus pneumoniae (strain 70585).